Reading from the N-terminus, the 121-residue chain is Large ribosomal subunit protein uL22 (121 aa).

The protein belongs to the universal ribosomal protein uL22 family. Part of the 50S ribosomal subunit.

In terms of biological role, this protein binds specifically to 23S rRNA; its binding is stimulated by other ribosomal proteins, e.g. L4, L17, and L20. It is important during the early stages of 50S assembly. It makes multiple contacts with different domains of the 23S rRNA in the assembled 50S subunit and ribosome. Its function is as follows. The globular domain of the protein is located near the polypeptide exit tunnel on the outside of the subunit, while an extended beta-hairpin is found that lines the wall of the exit tunnel in the center of the 70S ribosome. This is Large ribosomal subunit protein uL22 from Beutenbergia cavernae (strain ATCC BAA-8 / DSM 12333 / CCUG 43141 / JCM 11478 / NBRC 16432 / NCIMB 13614 / HKI 0122).